Here is a 472-residue protein sequence, read N- to C-terminus: E3 ubiquitin-protein ligase MYLIP-A (472 aa).

An FERM domain is found at 1-279 (MLCHVTRPDA…ETHAFYRCDT (279 aa)). The segment at 384 to 419 (CMLCCEEEIDAAFCPCGHMVCCQNCAAQLQSCPVCR) adopts an RING-type zinc-finger fold.

In terms of assembly, interacts with anxa5. In terms of tissue distribution, ubiquitous.

It localises to the cytoplasm. The protein resides in the cytosol. The enzyme catalyses S-ubiquitinyl-[E2 ubiquitin-conjugating enzyme]-L-cysteine + [acceptor protein]-L-lysine = [E2 ubiquitin-conjugating enzyme]-L-cysteine + N(6)-ubiquitinyl-[acceptor protein]-L-lysine.. It participates in protein modification; protein ubiquitination. In terms of biological role, E3 ubiquitin-protein ligase that mediates ubiquitination and subsequent proteasomal degradation of myosin regulatory light chain (MRLC). Regulates cell movements during gastrulation by acting downstream of fz7 to antagonize the frizzled-signaling pathway. This is E3 ubiquitin-protein ligase MYLIP-A (mylipa) from Danio rerio (Zebrafish).